Consider the following 533-residue polypeptide: CTP synthase (533 aa).

The segment at Met-1–Ile-269 is amidoligase domain. Ser-16 contributes to the CTP binding site. Ser-16 provides a ligand contact to UTP. Residues Gly-17–Val-22 and Asp-73 each bind ATP. Positions 73 and 143 each coordinate Mg(2+). CTP contacts are provided by residues Asp-150–Glu-152, Lys-190–Gln-195, and Lys-226. UTP contacts are provided by residues Lys-190–Gln-195 and Lys-226. The Glutamine amidotransferase type-1 domain maps to Tyr-304–Ile-533. Gly-355 lines the L-glutamine pocket. The active-site Nucleophile; for glutamine hydrolysis is Cys-382. L-glutamine contacts are provided by residues Leu-383–Gln-386, Glu-406, and Arg-466. Residues His-511 and Glu-513 contribute to the active site.

This sequence belongs to the CTP synthase family. In terms of assembly, homotetramer.

It catalyses the reaction UTP + L-glutamine + ATP + H2O = CTP + L-glutamate + ADP + phosphate + 2 H(+). The catalysed reaction is L-glutamine + H2O = L-glutamate + NH4(+). The enzyme catalyses UTP + NH4(+) + ATP = CTP + ADP + phosphate + 2 H(+). Its pathway is pyrimidine metabolism; CTP biosynthesis via de novo pathway; CTP from UDP: step 2/2. Allosterically activated by GTP, when glutamine is the substrate; GTP has no effect on the reaction when ammonia is the substrate. The allosteric effector GTP functions by stabilizing the protein conformation that binds the tetrahedral intermediate(s) formed during glutamine hydrolysis. Inhibited by the product CTP, via allosteric rather than competitive inhibition. In terms of biological role, catalyzes the ATP-dependent amination of UTP to CTP with either L-glutamine or ammonia as the source of nitrogen. Regulates intracellular CTP levels through interactions with the four ribonucleotide triphosphates. This is CTP synthase from Borreliella afzelii (strain PKo) (Borrelia afzelii).